The following is a 378-amino-acid chain: Mating-type protein MAT-1 (378 aa).

Positions 60 to 117 (KARKALNAFVGFRCYYITIPMFKPWPMKKLSNLIGLLWEADPNKSLWSLMAKPWSTIR) form a DNA-binding region, alpha box.

It belongs to the MATALPHA1 family.

It localises to the nucleus. In terms of biological role, mating type proteins are sequence specific DNA-binding proteins that act as master switches in fungal differentiation by controlling gene expression in a cell type-specific fashion. Transcriptional activator that induces the transcription of alpha-specific genes. The protein is Mating-type protein MAT-1 (MAT1) of Cochliobolus sativus (Common root rot and spot blotch fungus).